A 439-amino-acid chain; its full sequence is Deacetylvindoline O-acetyltransferase (439 aa).

The Proton acceptor role is filled by His158. Residues Thr317–Gln344 are a coiled coil. Asp380 (proton acceptor) is an active-site residue.

This sequence belongs to the plant acyltransferase family. Monomer. As to expression, predominantly expressed in young leaves of mature plants. Low expression in stems and flowers and not detected in roots. Confined to the laticifer and idioblast cells of leaves, stems, and flower buds.

The protein resides in the cytoplasm. The protein localises to the nucleus. The enzyme catalyses 4-O-deacetylvindoline + acetyl-CoA = vindoline + CoA. It participates in alkaloid biosynthesis; vindoline biosynthesis. Its function is as follows. Involved in the biosynthesis of vindoline, a precursor of vinblastine and vincristine. The polypeptide is Deacetylvindoline O-acetyltransferase (Catharanthus roseus (Madagascar periwinkle)).